Here is a 1178-residue protein sequence, read N- to C-terminus: Pyruvate carboxylase, mitochondrial (1178 aa).

The N-terminal 20 residues, 1 to 20 (MLKFRTVHGGLRLLGIRRTS), are a transit peptide targeting the mitochondrion. N6-acetyllysine occurs at positions 35 and 39. The region spanning 36-486 (PIKKVMVANR…DTQFIDENPE (451 aa)) is the Biotin carboxylation domain. Lysine 79 carries the N6-acetyllysine; alternate modification. The residue at position 79 (lysine 79) is an N6-succinyllysine; alternate. N6-acetyllysine occurs at positions 148 and 152. ATP contacts are provided by lysine 152 and glutamate 236. In terms of domain architecture, ATP-grasp spans 156–353 (RAIAIAAGVP…LVHAQIHVAE (198 aa)). Position 241 is an N6-acetyllysine (lysine 241). Histidine 271 is an ATP binding site. Lysine 297 and lysine 319 each carry N6-acetyllysine. Residue arginine 328 is part of the active site. Position 434 is an N6-acetyllysine (lysine 434). Lysine 442 bears the N6-succinyllysine mark. The 270-residue stretch at 563-832 (LLLMDTTFRD…DTEVPMERVF (270 aa)) folds into the Pyruvate carboxyltransferase domain. Residue 571–575 (RDAHQ) coordinates substrate. Mn(2+) is bound at residue aspartate 572. Lysine 589 carries the post-translational modification N6-acetyllysine. Arginine 644 serves as a coordination point for substrate. 2 positions are modified to N6-acetyllysine: lysine 661 and lysine 717. Lysine 741 contacts Mn(2+). An N6-carboxylysine modification is found at lysine 741. Lysine 748 bears the N6-acetyllysine mark. Positions 771 and 773 each coordinate Mn(2+). N6-acetyllysine is present on lysine 892. Substrate is bound at residue threonine 908. Lysine 969 and lysine 992 each carry N6-acetyllysine. Threonine 1003 is subject to Phosphothreonine. N6-acetyllysine occurs at positions 1061, 1090, and 1124. Residues 1109–1178 (KGQIGAPMPG…EGDDLILEIE (70 aa)) form the Biotinyl-binding domain. Lysine 1144 carries the N6-biotinyllysine modification.

In terms of assembly, homotetramer. Interacts (via the biotin carboxylation domain) with SIRT4. Biotin serves as cofactor. Requires Mn(2+) as cofactor. Post-translationally, acetylation of Lys-748 might play a role in catalytic activity regulation.

The protein resides in the mitochondrion matrix. It catalyses the reaction hydrogencarbonate + pyruvate + ATP = oxaloacetate + ADP + phosphate + H(+). The protein operates within carbohydrate biosynthesis; gluconeogenesis. In terms of biological role, pyruvate carboxylase catalyzes a 2-step reaction, involving the ATP-dependent carboxylation of the covalently attached biotin in the first step and the transfer of the carboxyl group to pyruvate in the second. Catalyzes in a tissue specific manner, the initial reactions of glucose (liver, kidney) and lipid (adipose tissue, liver, brain) synthesis from pyruvate. In Homo sapiens (Human), this protein is Pyruvate carboxylase, mitochondrial.